The sequence spans 227 residues: Protein FAM3C (227 aa).

A signal peptide spans 1 to 24 (MRVAGAAKLVVAVAVFLLTFYVIS). 2 disulfide bridges follow: cysteine 58–cysteine 86 and cysteine 64–cysteine 221. Positions 67-225 (KHFAFKMASG…VEMEGCIPQK (159 aa)) constitute a GG-type lectin domain.

This sequence belongs to the FAM3 family. As to expression, present in most secretory epithelia (at protein level).

Its subcellular location is the secreted. It is found in the cytoplasmic vesicle. Its function is as follows. May be involved in retinal laminar formation. Promotes epithelial to mesenchymal transition. This Homo sapiens (Human) protein is Protein FAM3C (FAM3C).